The primary structure comprises 102 residues: COX assembly mitochondrial protein 2 homolog (102 aa).

The 45-residue stretch at 11–55 (TKECNMLIEFLQRCHSEKPIGKMIGKCSYWDEAVWQCTKKERIWR) folds into the CHCH domain. 2 short sequence motifs (cx9C motif) span residues 14–24 (CNMLIEFLQRC) and 37–47 (CSYWDEAVWQC). 2 disulfide bridges follow: C14/C47 and C24/C37.

Belongs to the CMC family.

It localises to the mitochondrion. Its function is as follows. May be involved in cytochrome c oxidase biogenesis. This is COX assembly mitochondrial protein 2 homolog from Caenorhabditis elegans.